Here is a 480-residue protein sequence, read N- to C-terminus: Alpha,alpha-trehalose-phosphate synthase [UDP-forming] 2 (480 aa).

D-glucose 6-phosphate is bound by residues Tyr-97 and Asp-151. 2 residues coordinate UDP: Arg-288 and Lys-293. 2 residues coordinate UDP-alpha-D-glucose: Arg-288 and Lys-293. Arg-326 provides a ligand contact to D-glucose 6-phosphate. 387–395 (DGMNLVSFE) is a binding site for UDP-alpha-D-glucose. Position 391-395 (391-395 (LVSFE)) interacts with UDP.

Belongs to the glycosyltransferase 20 family.

The catalysed reaction is D-glucose 6-phosphate + UDP-alpha-D-glucose = alpha,alpha-trehalose 6-phosphate + UDP + H(+). It participates in carbohydrate biosynthesis. In terms of biological role, synthase catalytic subunit of the trehalose synthase complex that catalyzes the production of trehalose from glucose-6-phosphate and UDP-alpha-D-glucose in a two step process. This is Alpha,alpha-trehalose-phosphate synthase [UDP-forming] 2 from Aspergillus niger.